Reading from the N-terminus, the 547-residue chain is MFS-type transporter ungB (547 aa).

The next 14 membrane-spanning stretches (helical) occupy residues 14–34, 50–70, 80–100, 111–131, 138–158, 169–189, 210–230, 238–258, 279–299, 316–336, 343–363, 366–386, 392–412, and 475–495; these read LLVT…ETVL, DVGW…MAWG, WVFL…GVSP, IAGL…SNTI, IYLG…PVIG, WCFF…VFCL, LLGS…LEWG, SWRV…FAVV, LGLI…VYYL, LAIL…GILV, TPFL…LSSL, ASGL…IGLG, VVPS…TLCF, and AVSE…LGSA. The disordered stretch occupies residues 503-547; sequence PGHKEATEKVEGEGQGQGQQQEQDQGQGWGEVGESHALAHPTADK. A compositionally biased stretch (basic and acidic residues) spans 504–514; that stretch reads GHKEATEKVEG.

Belongs to the major facilitator superfamily. TCR/Tet family.

The protein resides in the membrane. MFS-type transporter; part of the gene cluster that mediates the biosynthesis of the unguisins, gamma-aminobutyric acid (GABA)-containing fungal cyclic heptapeptides with the amino acid sequence cyclo-(D-Ala1-D-Val2-L-Phe3-D-Val4-D-Ala5-D-Trp6-GABA7) for unguisin A and cyclo-(D-Ala1-D-Val2-L-Leu3-D-Val4-D-Ala5-D-Trp6-GABA7) for unguisin B. May be involved in the secretion of unguisins. The sequence is that of MFS-type transporter ungB from Aspergillus violaceofuscus (strain CBS 115571).